The chain runs to 674 residues: MSDIEDNDGDEYDELSELRQRHKPESQPSVDEAFDLDDLLPTIGEFGKYQKLLVFGICLPACIPCGFCAFNQLFMADTPDDYWCRIPELLDLPLEQRKSLSIPKELDNDELVYSKCYTYGVNWTQLLESGEEDDLTTMEPNASWPLIKCPQGWEYNTSVVWSSIVIDFDLVCDQDIYPTIGLAALNTGGPVGVYLFGLLNDRGGRRLSYFVCLATLLAGSLMTSLSKDFWTWAGSRVIVGLTIPAVYQIPFIISLELVGENYRSFVTVMTCTFYTSGIMLLSGVTYLERDWVRLSYITSLPFYAYFLYMFVMPESPRWLLMRGRLEEALKILERMAKVNGREFPEAVHLKLEAQIRRDKLKKQKKKMANVGLADLCRTPNMRLKTILITLSWFANETVYLGLSYYGPALGTNQYVSFFLSAVVELPSYLCCWYFMDTWGRRWPLSLSMILGGVACVITVMLPDDAVDETLVLYLVSKALLSASFLIIYPFAGELYPTQVRGIGIGASSYIGGLGLIGIPFITYLGKDNLKLPLVIMGFLSMLGGMTGLRLPETLHHRLPQTIEEGEEFGKNWQFKDCCRCAQKPEILSQPASYENLDVLAGSSTNASEVELELRDSRRVREPAPRIDERTPLDTTASGSGRPVHRPSMKRLVRQMSVMDTQRTHDGTMQLTHWI.

At 1 to 53 the chain is on the cytoplasmic side; the sequence is MSDIEDNDGDEYDELSELRQRHKPESQPSVDEAFDLDDLLPTIGEFGKYQKLL. A helical transmembrane segment spans residues 54–74; the sequence is VFGICLPACIPCGFCAFNQLF. Residues 75-178 lie on the Extracellular side of the membrane; sequence MADTPDDYWC…DLVCDQDIYP (104 aa). N122, N141, and N156 each carry an N-linked (GlcNAc...) asparagine glycan. The chain crosses the membrane as a helical span at residues 179–199; it reads TIGLAALNTGGPVGVYLFGLL. Residues 200-206 are Cytoplasmic-facing; it reads NDRGGRR. A helical membrane pass occupies residues 207–227; sequence LSYFVCLATLLAGSLMTSLSK. Topologically, residues 228 to 236 are extracellular; it reads DFWTWAGSR. Residues 237 to 257 form a helical membrane-spanning segment; the sequence is VIVGLTIPAVYQIPFIISLEL. Residues 258–264 lie on the Cytoplasmic side of the membrane; that stretch reads VGENYRS. The helical transmembrane segment at 265 to 285 threads the bilayer; the sequence is FVTVMTCTFYTSGIMLLSGVT. Residues 286-293 lie on the Extracellular side of the membrane; sequence YLERDWVR. Residues 294 to 314 form a helical membrane-spanning segment; that stretch reads LSYITSLPFYAYFLYMFVMPE. Residues 315–385 are Cytoplasmic-facing; it reads SPRWLLMRGR…CRTPNMRLKT (71 aa). Residues 386 to 406 form a helical membrane-spanning segment; it reads ILITLSWFANETVYLGLSYYG. The Extracellular portion of the chain corresponds to 407 to 414; sequence PALGTNQY. The helical transmembrane segment at 415 to 435 threads the bilayer; the sequence is VSFFLSAVVELPSYLCCWYFM. Residues 436-441 are Cytoplasmic-facing; it reads DTWGRR. The chain crosses the membrane as a helical span at residues 442 to 462; that stretch reads WPLSLSMILGGVACVITVMLP. Residues 463 to 469 are Extracellular-facing; sequence DDAVDET. The helical transmembrane segment at 470–490 threads the bilayer; the sequence is LVLYLVSKALLSASFLIIYPF. The Cytoplasmic segment spans residues 491 to 500; that stretch reads AGELYPTQVR. The helical transmembrane segment at 501-521 threads the bilayer; the sequence is GIGIGASSYIGGLGLIGIPFI. Topologically, residues 522-527 are extracellular; it reads TYLGKD. Residues 528 to 548 traverse the membrane as a helical segment; the sequence is NLKLPLVIMGFLSMLGGMTGL. The Cytoplasmic portion of the chain corresponds to 549-674; that stretch reads RLPETLHHRL…DGTMQLTHWI (126 aa). Over residues 614–631 the composition is skewed to basic and acidic residues; sequence RDSRRVREPAPRIDERTP. The disordered stretch occupies residues 614 to 647; sequence RDSRRVREPAPRIDERTPLDTTASGSGRPVHRPS.

The protein belongs to the major facilitator (TC 2.A.1) superfamily. Organic cation transporter (TC 2.A.1.19) family. In terms of tissue distribution, expressed in photoreceptor cells.

The protein localises to the cell membrane. It is found in the cell projection. It localises to the axon. Functionally, carcinine transporter which is required for recycling of the neurotransmitter histamine in photoreceptor neurons of the compound eye. Following histamine release from photoreceptors and its uptake by glia where it is converted to carcinine, required for the uptake of carcinine from glia into photoreceptor cells where it can be hydrolyzed by tan to form histamine and beta-alanine. This chain is Carcinine transporter, found in Drosophila melanogaster (Fruit fly).